Here is a 126-residue protein sequence, read N- to C-terminus: Large ribosomal subunit protein bL12 (126 aa).

It belongs to the bacterial ribosomal protein bL12 family. As to quaternary structure, homodimer. Part of the ribosomal stalk of the 50S ribosomal subunit. Forms a multimeric L10(L12)X complex, where L10 forms an elongated spine to which 2 to 4 L12 dimers bind in a sequential fashion. Binds GTP-bound translation factors.

In terms of biological role, forms part of the ribosomal stalk which helps the ribosome interact with GTP-bound translation factors. Is thus essential for accurate translation. The protein is Large ribosomal subunit protein bL12 of Elusimicrobium minutum (strain Pei191).